Here is a 565-residue protein sequence, read N- to C-terminus: Urocanate hydratase (565 aa).

NAD(+) contacts are provided by residues Gly-58–Gly-59, Gln-136, Gly-182–Gly-184, Glu-202, Arg-207, Asn-245–Ala-246, Gln-266–His-270, Tyr-276–Leu-277, and Tyr-325. Cys-413 is a catalytic residue. Residue Gly-495 coordinates NAD(+).

Belongs to the urocanase family. NAD(+) serves as cofactor.

The protein localises to the cytoplasm. It catalyses the reaction 4-imidazolone-5-propanoate = trans-urocanate + H2O. The protein operates within amino-acid degradation; L-histidine degradation into L-glutamate; N-formimidoyl-L-glutamate from L-histidine: step 2/3. In terms of biological role, catalyzes the conversion of urocanate to 4-imidazolone-5-propionate. This chain is Urocanate hydratase, found in Vibrio vulnificus (strain CMCP6).